The primary structure comprises 245 residues: Adenosylcobinamide-GDP ribazoletransferase (245 aa).

A run of 5 helical transmembrane segments spans residues F31 to A51, P61 to L81, V113 to L133, A138 to T158, and L192 to L212.

Belongs to the CobS family. It depends on Mg(2+) as a cofactor.

The protein localises to the cell inner membrane. It carries out the reaction alpha-ribazole + adenosylcob(III)inamide-GDP = adenosylcob(III)alamin + GMP + H(+). The enzyme catalyses alpha-ribazole 5'-phosphate + adenosylcob(III)inamide-GDP = adenosylcob(III)alamin 5'-phosphate + GMP + H(+). It functions in the pathway cofactor biosynthesis; adenosylcobalamin biosynthesis; adenosylcobalamin from cob(II)yrinate a,c-diamide: step 7/7. In terms of biological role, joins adenosylcobinamide-GDP and alpha-ribazole to generate adenosylcobalamin (Ado-cobalamin). Also synthesizes adenosylcobalamin 5'-phosphate from adenosylcobinamide-GDP and alpha-ribazole 5'-phosphate. This is Adenosylcobinamide-GDP ribazoletransferase from Pseudomonas aeruginosa (strain ATCC 15692 / DSM 22644 / CIP 104116 / JCM 14847 / LMG 12228 / 1C / PRS 101 / PAO1).